Here is a 137-residue protein sequence, read N- to C-terminus: Ciliary microtubule inner protein 1 (137 aa).

Expressed in airway epithelial cells, renal tubular cells, pancreatic acinar cells and epithelial cells of the stomach, duodenum, and gallbladder (at protein level).

The protein localises to the cell projection. Its subcellular location is the cilium. The polypeptide is Ciliary microtubule inner protein 1 (Homo sapiens (Human)).